The sequence spans 259 residues: Major cell-binding factor (259 aa).

Positions 1–26 (MVFRKSLLKLAVFALGACVAFSNANA) are cleaved as a signal peptide.

This sequence belongs to the bacterial solute-binding protein 3 family.

It localises to the cell surface. Functionally, common antigen and a major cell adherence molecule. Most probably involved, with PEB1C, in a binding-protein-dependent transport system for an amino acid. May be involved in binding to intestinal cells. The polypeptide is Major cell-binding factor (peb1A) (Campylobacter jejuni subsp. jejuni serotype O:2 (strain ATCC 700819 / NCTC 11168)).